Here is a 584-residue protein sequence, read N- to C-terminus: MTQEGRIIKIAGPVIIAEGMRGSQMYEMVKVGEDKLIGEIIELEGDTATIQVYEETAGIKPGETVERTGGPLSVELGPGILGSIFDGIQRPLENIKALTGDYIERGVDVPSLPKDKKWTFKPTAREGQMVKGGDIIGEVEETSSITHRIMIPPNVEGKLTMIAPQGEYTVLDDIAEVETESGTEKIQMLQKWPVRKGRPYKKKLDPDVPLVTGQRAQDTFFSVAKGGTAAIPGPFGSGKTVTQQQLAKWADADIIVYVGCGERGNEMTEVLKEFPELEDPKTGNPLMDRTVLIANTSNMPVAAREACVYTGITIAEYFRDMGYDVALMADSTSRWAEAMREISGRLEEMPGEEGYPAYLASRLAQFYERAGRVTTIGSEDKIASVSVVGAVSPPGGDLSEPVTQNTLRICKVFWALDASLADKRHFPSIDWLQSYSLYIDSVQEWWASNVDPEWRKFRDEAMALLQKEAELQEIVQLVGPDALPDRERITLETTRMIREDFLQQNAYHEVDTYCSPSKQFEMLRTIIMFHRNATAALEKGAPAADIISLPVKEDIGRMKYIPEEEFPARIKEIQERIVKECSEV.

233–240 (GPFGSGKT) is an ATP binding site.

The protein belongs to the ATPase alpha/beta chains family. In terms of assembly, has multiple subunits with at least A(3), B(3), C, D, E, F, H, I and proteolipid K(x).

Its subcellular location is the cell membrane. It carries out the reaction ATP + H2O + 4 H(+)(in) = ADP + phosphate + 5 H(+)(out). Component of the A-type ATP synthase that produces ATP from ADP in the presence of a proton gradient across the membrane. The A chain is the catalytic subunit. This chain is A-type ATP synthase subunit A, found in Methanothermobacter thermautotrophicus (strain ATCC 29096 / DSM 1053 / JCM 10044 / NBRC 100330 / Delta H) (Methanobacterium thermoautotrophicum).